The sequence spans 340 residues: Phosphoribosylformylglycinamidine cyclo-ligase (340 aa).

Belongs to the AIR synthase family.

It is found in the cytoplasm. It catalyses the reaction 2-formamido-N(1)-(5-O-phospho-beta-D-ribosyl)acetamidine + ATP = 5-amino-1-(5-phospho-beta-D-ribosyl)imidazole + ADP + phosphate + H(+). The protein operates within purine metabolism; IMP biosynthesis via de novo pathway; 5-amino-1-(5-phospho-D-ribosyl)imidazole from N(2)-formyl-N(1)-(5-phospho-D-ribosyl)glycinamide: step 2/2. The sequence is that of Phosphoribosylformylglycinamidine cyclo-ligase from Streptococcus pyogenes serotype M1.